Reading from the N-terminus, the 350-residue chain is Protein-arginine kinase (350 aa).

A Phosphagen kinase C-terminal domain is found at 21–253 (IVISSRIRLA…VRLADQEREA (233 aa)). Residues 24-28 (SSRIR), H90, R124, 175-179 (RASTM), and 206-211 (RGLYGE) each bind ATP. Residues 336–341 (RDVHRA) carry the RDXXRA motif of the pArg binding pocket involved in allosteric regulation motif.

This sequence belongs to the ATP:guanido phosphotransferase family.

The catalysed reaction is L-arginyl-[protein] + ATP = N(omega)-phospho-L-arginyl-[protein] + ADP + H(+). Appears to be allosterically activated by the binding of pArg-containing polypeptides to the pArg-binding pocket localized in the C-terminal domain of McsB. In terms of biological role, catalyzes the specific phosphorylation of arginine residues in proteins. The protein is Protein-arginine kinase of Moorella thermoacetica (strain ATCC 39073 / JCM 9320).